Consider the following 300-residue polypeptide: Acetylglutamate kinase (300 aa).

Residues Gly-72–Gly-73, Arg-94, and Asn-197 each bind substrate.

This sequence belongs to the acetylglutamate kinase family. ArgB subfamily.

It localises to the cytoplasm. It carries out the reaction N-acetyl-L-glutamate + ATP = N-acetyl-L-glutamyl 5-phosphate + ADP. It participates in amino-acid biosynthesis; L-arginine biosynthesis; N(2)-acetyl-L-ornithine from L-glutamate: step 2/4. Functionally, catalyzes the ATP-dependent phosphorylation of N-acetyl-L-glutamate. The chain is Acetylglutamate kinase from Azoarcus sp. (strain BH72).